Reading from the N-terminus, the 334-residue chain is Aspartate carbamoyltransferase catalytic subunit (334 aa).

Arginine 70 and threonine 71 together coordinate carbamoyl phosphate. Lysine 98 contacts L-aspartate. Carbamoyl phosphate contacts are provided by arginine 120, histidine 150, and glutamine 153. Residues arginine 183 and arginine 238 each coordinate L-aspartate. Carbamoyl phosphate is bound by residues glycine 279 and proline 280.

The protein belongs to the aspartate/ornithine carbamoyltransferase superfamily. ATCase family. In terms of assembly, heterododecamer (2C3:3R2) of six catalytic PyrB chains organized as two trimers (C3), and six regulatory PyrI chains organized as three dimers (R2).

The enzyme catalyses carbamoyl phosphate + L-aspartate = N-carbamoyl-L-aspartate + phosphate + H(+). Its pathway is pyrimidine metabolism; UMP biosynthesis via de novo pathway; (S)-dihydroorotate from bicarbonate: step 2/3. Catalyzes the condensation of carbamoyl phosphate and aspartate to form carbamoyl aspartate and inorganic phosphate, the committed step in the de novo pyrimidine nucleotide biosynthesis pathway. This Marinomonas sp. (strain MWYL1) protein is Aspartate carbamoyltransferase catalytic subunit.